A 314-amino-acid chain; its full sequence is Small ribosomal subunit biogenesis GTPase RsgA (314 aa).

Residues 1-21 form a disordered region; sequence MKRAPTKQPAKPAARGGERAQ. Residues 85–246 form the CP-type G domain; that stretch reads SDQFKSKLFA…LIDSPGFQEF (162 aa). GTP is bound by residues 134-137 and 188-196; these read NKID and GQSGMGKST. Zn(2+) contacts are provided by C270, C275, H277, and C283.

This sequence belongs to the TRAFAC class YlqF/YawG GTPase family. RsgA subfamily. As to quaternary structure, monomer. Associates with 30S ribosomal subunit, binds 16S rRNA. It depends on Zn(2+) as a cofactor.

It localises to the cytoplasm. Its function is as follows. One of several proteins that assist in the late maturation steps of the functional core of the 30S ribosomal subunit. Helps release RbfA from mature subunits. May play a role in the assembly of ribosomal proteins into the subunit. Circularly permuted GTPase that catalyzes slow GTP hydrolysis, GTPase activity is stimulated by the 30S ribosomal subunit. This is Small ribosomal subunit biogenesis GTPase RsgA from Burkholderia pseudomallei (strain 1106a).